The sequence spans 347 residues: N-acetyl-gamma-glutamyl-phosphate reductase (347 aa).

C152 is a catalytic residue.

This sequence belongs to the NAGSA dehydrogenase family. Type 1 subfamily.

The protein resides in the cytoplasm. The enzyme catalyses N-acetyl-L-glutamate 5-semialdehyde + phosphate + NADP(+) = N-acetyl-L-glutamyl 5-phosphate + NADPH + H(+). It participates in amino-acid biosynthesis; L-arginine biosynthesis; N(2)-acetyl-L-ornithine from L-glutamate: step 3/4. In terms of biological role, catalyzes the NADPH-dependent reduction of N-acetyl-5-glutamyl phosphate to yield N-acetyl-L-glutamate 5-semialdehyde. The protein is N-acetyl-gamma-glutamyl-phosphate reductase of Neisseria meningitidis serogroup C / serotype 2a (strain ATCC 700532 / DSM 15464 / FAM18).